A 113-amino-acid chain; its full sequence is U11-theraphotoxin-Hhn1a (113 aa).

A signal peptide spans 1–21 (MNTVRVTFLLVFVLAVSLGQA). A propeptide spanning residues 22–74 (DKDENRMVMQEKTEQGKSYLDFAENLLLQKLEELEAKLLEEDSEESRNSRQKR) is cleaved from the precursor. Intrachain disulfides connect Cys75–Cys90, Cys82–Cys95, and Cys89–Cys110.

This sequence belongs to the neurotoxin 14 (magi-1) family. 01 (HNTX-16) subfamily. In terms of tissue distribution, expressed by the venom gland.

It is found in the secreted. In terms of biological role, probable ion channel inhibitor. The protein is U11-theraphotoxin-Hhn1a of Cyriopagopus hainanus (Chinese bird spider).